The primary structure comprises 241 residues: ATP synthase subunit a (241 aa).

5 helical membrane-spanning segments follow: residues Gly-30–Gly-50, Leu-89–Ile-109, Ile-128–Ser-148, Leu-193–Leu-213, and Gly-214–Gly-234.

This sequence belongs to the ATPase A chain family. In terms of assembly, F-type ATPases have 2 components, CF(1) - the catalytic core - and CF(0) - the membrane proton channel. CF(1) has five subunits: alpha(3), beta(3), gamma(1), delta(1), epsilon(1). CF(0) has four main subunits: a, b, b' and c.

It localises to the cellular thylakoid membrane. Key component of the proton channel; it plays a direct role in the translocation of protons across the membrane. This chain is ATP synthase subunit a, found in Synechococcus sp. (strain CC9311).